Consider the following 186-residue polypeptide: Elongation factor P (186 aa).

It belongs to the elongation factor P family.

Its subcellular location is the cytoplasm. It functions in the pathway protein biosynthesis; polypeptide chain elongation. Involved in peptide bond synthesis. Stimulates efficient translation and peptide-bond synthesis on native or reconstituted 70S ribosomes in vitro. Probably functions indirectly by altering the affinity of the ribosome for aminoacyl-tRNA, thus increasing their reactivity as acceptors for peptidyl transferase. The sequence is that of Elongation factor P from Maridesulfovibrio salexigens (strain ATCC 14822 / DSM 2638 / NCIMB 8403 / VKM B-1763) (Desulfovibrio salexigens).